Consider the following 195-residue polypeptide: MALTPTFSRAPDIAPAPKGIIDPATGRPIGANDPTFLSINDELADRGFLVTSADELINWARTGSLMWMTFGLACCAVEMMQMSMPRYDCERFGFAPRGSPRQSDVMIVAGTLTNKMAPALRKVYDQMPEPRYVISMGSCANGGGYYHYSYSVVRGCDRVVPVDIYVPGCPPSAEALLYGVLLLQRKIRRIGTIER.

Residues cysteine 74, cysteine 75, cysteine 139, and cysteine 169 each contribute to the [4Fe-4S] cluster site.

This sequence belongs to the complex I 20 kDa subunit family. NDH-1 is composed of 14 different subunits. Subunits NuoB, C, D, E, F, and G constitute the peripheral sector of the complex. The cofactor is [4Fe-4S] cluster.

It localises to the cell inner membrane. It carries out the reaction a quinone + NADH + 5 H(+)(in) = a quinol + NAD(+) + 4 H(+)(out). Functionally, NDH-1 shuttles electrons from NADH, via FMN and iron-sulfur (Fe-S) centers, to quinones in the respiratory chain. The immediate electron acceptor for the enzyme in this species is believed to be ubiquinone. Couples the redox reaction to proton translocation (for every two electrons transferred, four hydrogen ions are translocated across the cytoplasmic membrane), and thus conserves the redox energy in a proton gradient. The protein is NADH-quinone oxidoreductase subunit B of Methylorubrum extorquens (strain PA1) (Methylobacterium extorquens).